A 279-amino-acid chain; its full sequence is 2-dehydropantoate 2-reductase (279 aa).

Residues 6–11, Lys-66, and Asn-86 contribute to the NADP(+) site; that span reads GLGAVG. Lys-158 serves as the catalytic Proton donor. Residues Lys-158, Asn-162, Asn-166, Asn-176, and 225–228 contribute to the substrate site; that span reads NLSS. Glu-240 lines the NADP(+) pocket.

Belongs to the ketopantoate reductase family.

The protein resides in the cytoplasm. The enzyme catalyses (R)-pantoate + NAD(+) = 2-dehydropantoate + NADH + H(+). It carries out the reaction (R)-pantoate + NADP(+) = 2-dehydropantoate + NADPH + H(+). The protein operates within cofactor biosynthesis; coenzyme A biosynthesis. Catalyzes the NAD(P)H-dependent reduction of ketopantoate into pantoic acid. The protein is 2-dehydropantoate 2-reductase of Pyrobaculum aerophilum (strain ATCC 51768 / DSM 7523 / JCM 9630 / CIP 104966 / NBRC 100827 / IM2).